The chain runs to 435 residues: ATP-dependent protease ATPase subunit HslU (435 aa).

Residues Ile-18, 60–65 (GVGKTE), Asp-248, Glu-313, and Arg-385 each bind ATP.

It belongs to the ClpX chaperone family. HslU subfamily. In terms of assembly, a double ring-shaped homohexamer of HslV is capped on each side by a ring-shaped HslU homohexamer. The assembly of the HslU/HslV complex is dependent on binding of ATP.

The protein localises to the cytoplasm. ATPase subunit of a proteasome-like degradation complex; this subunit has chaperone activity. The binding of ATP and its subsequent hydrolysis by HslU are essential for unfolding of protein substrates subsequently hydrolyzed by HslV. HslU recognizes the N-terminal part of its protein substrates and unfolds these before they are guided to HslV for hydrolysis. The polypeptide is ATP-dependent protease ATPase subunit HslU (Rhizobium etli (strain CIAT 652)).